The chain runs to 214 residues: uncharacterized protein (214 aa).

2 consecutive CBS domains span residues 7–65 (MDKN…KKPI) and 69–129 (MRPV…EIPV).

This is an uncharacterized protein from Methanocaldococcus jannaschii (strain ATCC 43067 / DSM 2661 / JAL-1 / JCM 10045 / NBRC 100440) (Methanococcus jannaschii).